The primary structure comprises 689 residues: Pentatricopeptide repeat-containing protein At2g03380, mitochondrial (689 aa).

A mitochondrion-targeting transit peptide spans 1–12 (MLRSITLSPTRR). 16 PPR repeats span residues 75–105 (DISIATKLVSLYGFFGYTKDARLVFDQIPEP), 106–140 (DFYLWKVMLRCYCLNKESVEVVKLYDLLMKHGFRY), 141–171 (DDIVFSKALKACTELQDLDNGKKIHCQLVKV), 175–205 (DNVVLTGLLDMYAKCGEIKSAHKVFNDITLR), 206–240 (NVVCWTSMIAGYVKNDLCEEGLVLFNRMRENNVLG), 241–275 (NEYTYGTLIMACTKLSALHQGKWFHGCLVKSGIEL), 276–306 (SSCLVTSLLDMYVKCGDISNARRVFNEHSHV), 307–341 (DLVMWTAMIVGYTHNGSVNEALSLFQKMKGVEIKP), 342–372 (NCVTIASVLSGCGLIENLELGRSVHGLSIKV), 376–406 (DTNVANALVHMYAKCYQNRDAKYVFEMESEK), 407–441 (DIVAWNSIISGFSQNGSIHEALFLFHRMNSESVTP), 442–476 (NGVTVASLFSACASLGSLAVGSSLHAYSVKLGFLA), 479–509 (SVHVGTALLDFYAKCGDPQSARLIFDTIEEK), 510–544 (NTITWSAMIGGYGKQGDTIGSLELFEEMLKKQQKP), 545–580 (NESTFTSILSACGHTGMVNEGKKYFSSMYKDYNFTP), and 581–611 (STKHYTCMVDMLARAGELEQALDIIEKMPIQ). Residues 616–689 (CFGAFLHGCG…SKIAGHSTME (74 aa)) form a type E motif; degenerate region.

Belongs to the PPR family. PCMP-E subfamily.

It localises to the mitochondrion. This chain is Pentatricopeptide repeat-containing protein At2g03380, mitochondrial (PCMP-E47), found in Arabidopsis thaliana (Mouse-ear cress).